The primary structure comprises 165 residues: Interferon gamma (165 aa).

The first 23 residues, 1-23 (MKYTSYILAFQLCIVLGSLGCYC), serve as a signal peptide directing secretion. Gln-24 carries the post-translational modification Pyrrolidone carboxylic acid. Residues Asn-48 and Asn-120 are each glycosylated (N-linked (GlcNAc...) asparagine).

This sequence belongs to the type II (or gamma) interferon family. Homodimer. Interacts with IFNGR1 (via extracellular domain); this interaction promotes IFNGR1 dimerization.

The protein localises to the secreted. Functionally, type II interferon produced by immune cells such as T-cells and NK cells that plays crucial roles in antimicrobial, antiviral, and antitumor responses by activating effector immune cells and enhancing antigen presentation. Primarily signals through the JAK-STAT pathway after interaction with its receptor IFNGR1 to affect gene regulation. Upon IFNG binding, IFNGR1 intracellular domain opens out to allow association of downstream signaling components JAK2, JAK1 and STAT1, leading to STAT1 activation, nuclear translocation and transcription of IFNG-regulated genes. Many of the induced genes are transcription factors such as IRF1 that are able to further drive regulation of a next wave of transcription. Plays a role in class I antigen presentation pathway by inducing a replacement of catalytic proteasome subunits with immunoproteasome subunits. In turn, increases the quantity, quality, and repertoire of peptides for class I MHC loading. Increases the efficiency of peptide generation also by inducing the expression of activator PA28 that associates with the proteasome and alters its proteolytic cleavage preference. Up-regulates as well MHC II complexes on the cell surface by promoting expression of several key molecules such as cathepsins B/CTSB, H/CTSH, and L/CTSL. Participates in the regulation of hematopoietic stem cells during development and under homeostatic conditions by affecting their development, quiescence, and differentiation. The sequence is that of Interferon gamma (IFNG) from Papio anubis (Olive baboon).